Here is a 2057-residue protein sequence, read N- to C-terminus: Myosin heavy chain, non-muscle (2057 aa).

The 51-residue stretch at 78–128 (HRSVLVWVPHENQGFVAASIKREHGDEVEVELAETGKRVMILRDDIQKMNP) folds into the Myosin N-terminal SH3-like domain. The Myosin motor domain maps to 132–867 (DKVEDMAELT…VLAHLEEERD (736 aa)). 225-232 (GESGAGKT) is a binding site for ATP. The 25 kDa/50 kDa junction stretch occupies residues 250-260 (PKGSGAVPHPA). Residues 722–734 (DTQFGARTRKGMF) form a 50 kDa/20 kDa junction region. The interval 745-767 (LAKLMDTLRNTNPNFVRCIIPNH) is actin-binding. A reactive sulfhydryl/actin-binding region spans residues 782–798 (QLRCNGVLEGIRICRQG). The 30-residue stretch at 870–899 (ISDLIVNFQAFCRGFLARRNYQKRLQQLNA) folds into the IQ domain. The stretch at 926 to 2016 (KPLLEVTKQE…SLKTKLRRTG (1091 aa)) forms a coiled coil. Disordered stretches follow at residues 1124–1144 (EERL…KRKI), 1782–1802 (SSER…EEIA), and 2008–2057 (LKTK…DSAN). Residues 1343-2010 (SQIAELQVKL…MNREINSLKT (668 aa)) are alpha-helical tailpiece (LMM). The segment at 1343–2057 (SQIAELQVKL…ESLDGEDSAN (715 aa)) is light meromyosin (LMM). The span at 1782 to 1792 (SSERARRAAET) shows a compositional bias: basic and acidic residues. The segment at 2011–2057 (KLRRTGGIGLSSSRLTGTPSSKRAGGGGGSDDSSVQDESLDGEDSAN) is globular tailpiece. Phosphoserine occurs at positions 2021 and 2022. A compositionally biased stretch (acidic residues) spans 2044–2057 (SVQDESLDGEDSAN).

This sequence belongs to the TRAFAC class myosin-kinesin ATPase superfamily. Myosin family. In terms of assembly, interacts with sau. Interacts with ck and Ubr3. In terms of processing, ubiquitinated. In Johnston's organ, expressed in neurons and scolopale cells.

The protein resides in the cell projection. The protein localises to the cilium. Its subcellular location is the cytoplasm. Its function is as follows. Nonmuscle myosin appears to be responsible for cellularization. Required for morphogenesis and cytokinesis. Necessary for auditory transduction: plays a role in Johnston's organ organization by acting in scolopidial apical attachment. Interaction with the myosin ck may be important for this function. Localizes to and defines the trailing edge of cells during larval epidermal wound healing. This process is dependent on the phosphatidylinositol 4-phosphate 5-kinase sktl/skittles. The sequence is that of Myosin heavy chain, non-muscle (zip) from Drosophila melanogaster (Fruit fly).